The following is a 426-amino-acid chain: MLDIAYIRQNPDEVAAMLRHRQLASEEPKLQQLLECDRQRKELVQRSDEQKALRNKVSKEVAEIKKKGVGSPDELISQMKAVSDAITAMDSRLSELEAEMENLLLALPNKLHPSVPIGRSAEDNMVFGEPVHFEHSLNFPLKNHLELGKALRILDFERGAKVSGAGFPVYVGKGARLERALINFMLDMHTEQHGYTEVFPPFLVNQESLRGTGQWPKFADQVYYIGEDDLYAIPTAEVPLTNLHRGEMVETNALPISYTAYTACFRREAGSYGKDTRGFLRVHQFNKVEMVKFTRPEDSYTALEEIRHHAQAILEALKIPYRVLLLCSGDISANATKCYDIEVWSPAEEKYLEASSCSNFEEYQARRSNIRFKPDSKSKPEFVHTLNGSGLATSRLMVSLLEHYQTADGHIRVPNVLQRYTGFTEI.

235–237 (TAE) lines the L-serine pocket. ATP-binding positions include 266–268 (RRE) and Val282. Glu289 serves as a coordination point for L-serine. 353-356 (EASS) lines the ATP pocket. Ser389 lines the L-serine pocket.

It belongs to the class-II aminoacyl-tRNA synthetase family. Type-1 seryl-tRNA synthetase subfamily. In terms of assembly, homodimer. The tRNA molecule binds across the dimer.

The protein localises to the cytoplasm. The catalysed reaction is tRNA(Ser) + L-serine + ATP = L-seryl-tRNA(Ser) + AMP + diphosphate + H(+). The enzyme catalyses tRNA(Sec) + L-serine + ATP = L-seryl-tRNA(Sec) + AMP + diphosphate + H(+). It participates in aminoacyl-tRNA biosynthesis; selenocysteinyl-tRNA(Sec) biosynthesis; L-seryl-tRNA(Sec) from L-serine and tRNA(Sec): step 1/1. Functionally, catalyzes the attachment of serine to tRNA(Ser). Is also able to aminoacylate tRNA(Sec) with serine, to form the misacylated tRNA L-seryl-tRNA(Sec), which will be further converted into selenocysteinyl-tRNA(Sec). The chain is Serine--tRNA ligase from Chlorobium chlorochromatii (strain CaD3).